A 69-amino-acid polypeptide reads, in one-letter code: Large ribosomal subunit protein uL29 (69 aa).

It belongs to the universal ribosomal protein uL29 family.

This is Large ribosomal subunit protein uL29 from Staphylococcus saprophyticus subsp. saprophyticus (strain ATCC 15305 / DSM 20229 / NCIMB 8711 / NCTC 7292 / S-41).